Reading from the N-terminus, the 193-residue chain is Peptidyl-tRNA hydrolase (193 aa).

Position 17 (H17) interacts with tRNA. H22 acts as the Proton acceptor in catalysis. F68, N70, and N116 together coordinate tRNA.

Belongs to the PTH family. Monomer.

It localises to the cytoplasm. It catalyses the reaction an N-acyl-L-alpha-aminoacyl-tRNA + H2O = an N-acyl-L-amino acid + a tRNA + H(+). Functionally, hydrolyzes ribosome-free peptidyl-tRNAs (with 1 or more amino acids incorporated), which drop off the ribosome during protein synthesis, or as a result of ribosome stalling. In terms of biological role, catalyzes the release of premature peptidyl moieties from peptidyl-tRNA molecules trapped in stalled 50S ribosomal subunits, and thus maintains levels of free tRNAs and 50S ribosomes. In Xanthomonas axonopodis pv. citri (strain 306), this protein is Peptidyl-tRNA hydrolase.